A 153-amino-acid chain; its full sequence is Selenoprotein F (153 aa).

The N-terminal stretch at 1 to 19 (MAGEVYLLWLLPLLQGLAS) is a signal peptide. Sec-84 is a non-standard amino acid (selenocysteine).

Belongs to the selenoprotein M/F family. In terms of tissue distribution, higher levels in polster, prechordal plate, axis, otic vesicle and somites. Lower levels in fin buds.

The protein localises to the endoplasmic reticulum lumen. Its function is as follows. May be involved in redox reactions associated with the formation of disulfide bonds. May contribute to the quality control of protein folding in the endoplasmic reticulum. The chain is Selenoprotein F from Danio rerio (Zebrafish).